Here is a 397-residue protein sequence, read N- to C-terminus: Pectate lyase (397 aa).

The signal sequence occupies residues 1–25; that stretch reads MDVYRIRISVFFLLVLLTFAALTTA. Asn134 carries an N-linked (GlcNAc...) asparagine glycan. Positions 191, 216, and 220 each coordinate Ca(2+). Residue Asn227 is glycosylated (N-linked (GlcNAc...) asparagine). The active site involves Arg272.

It belongs to the polysaccharide lyase 1 family. Ca(2+) serves as cofactor.

The catalysed reaction is Eliminative cleavage of (1-&gt;4)-alpha-D-galacturonan to give oligosaccharides with 4-deoxy-alpha-D-galact-4-enuronosyl groups at their non-reducing ends.. It participates in glycan metabolism; pectin degradation; 2-dehydro-3-deoxy-D-gluconate from pectin: step 2/5. The chain is Pectate lyase from Nicotiana tabacum (Common tobacco).